We begin with the raw amino-acid sequence, 91 residues long: Alpha-defensin-related sequence 10 (91 aa).

An N-terminal signal peptide occupies residues 1–19 (MKKLVLLSAFVLLAFQVQA). Residues 20 to 65 (DSIQNTDEETKTEEQPGEENQAMSVSFGDPEGSALQDAAVGMARPC) constitute a propeptide that is removed on maturation. A disordered region spans residues 21–52 (SIQNTDEETKTEEQPGEENQAMSVSFGDPEGS). Repeat copies occupy residues 65-67 (CPP), 68-70 (CPS), 71-73 (CPS), 74-76 (CPW), 77-79 (CPM), 80-82 (CPR), and 83-85 (CPS). Positions 65–85 (CPPCPSCPSCPWCPMCPRCPS) are 7 X 3 AA tandem repeats of C-P-X.

It belongs to the alpha-defensin family. Paneth cells of the small bowel.

The protein localises to the secreted. In terms of biological role, apparent precursor of a secreted, cationic, proline- and cysteine-rich peptide that contains Cys-Pro-Xaa repeats. Unlike cryptdin, the proposed mature peptide region lacks the structural motif characteristic of defensins. It may have microbicidal activities. The chain is Alpha-defensin-related sequence 10 (Defa-rs10) from Mus musculus (Mouse).